The primary structure comprises 384 residues: 1-deoxy-D-xylulose 5-phosphate reductoisomerase (384 aa).

Positions 10, 11, 12, 13, 36, 38, and 122 each coordinate NADPH. Residue Lys-123 participates in 1-deoxy-D-xylulose 5-phosphate binding. Residue Glu-124 participates in NADPH binding. Asp-148 is a binding site for Mn(2+). Residues Ser-149, Glu-150, Ser-174, and His-197 each coordinate 1-deoxy-D-xylulose 5-phosphate. Glu-150 serves as a coordination point for Mn(2+). Gly-203 contributes to the NADPH binding site. 1-deoxy-D-xylulose 5-phosphate is bound by residues Ser-210, Asn-215, Lys-216, and Glu-219. Residue Glu-219 participates in Mn(2+) binding.

It belongs to the DXR family. It depends on Mg(2+) as a cofactor. Mn(2+) serves as cofactor.

The catalysed reaction is 2-C-methyl-D-erythritol 4-phosphate + NADP(+) = 1-deoxy-D-xylulose 5-phosphate + NADPH + H(+). Its pathway is isoprenoid biosynthesis; isopentenyl diphosphate biosynthesis via DXP pathway; isopentenyl diphosphate from 1-deoxy-D-xylulose 5-phosphate: step 1/6. Its function is as follows. Catalyzes the NADPH-dependent rearrangement and reduction of 1-deoxy-D-xylulose-5-phosphate (DXP) to 2-C-methyl-D-erythritol 4-phosphate (MEP). This chain is 1-deoxy-D-xylulose 5-phosphate reductoisomerase, found in Geobacter metallireducens (strain ATCC 53774 / DSM 7210 / GS-15).